Reading from the N-terminus, the 303-residue chain is Probable serine/threonine-protein kinase FPV212 (303 aa).

One can recognise a Protein kinase domain in the interval 25 to 303 (WILGKQLGSG…NYESLKQMFL (279 aa)). ATP is bound by residues 31–39 (LGSGGFGLV) and Lys54. The active-site Proton acceptor is Asp160.

The protein belongs to the protein kinase superfamily. Ser/Thr protein kinase family. Poxviruses subfamily.

It carries out the reaction L-seryl-[protein] + ATP = O-phospho-L-seryl-[protein] + ADP + H(+). It catalyses the reaction L-threonyl-[protein] + ATP = O-phospho-L-threonyl-[protein] + ADP + H(+). The sequence is that of Probable serine/threonine-protein kinase FPV212 from Vertebrata (FPV).